Consider the following 513-residue polypeptide: ATP synthase subunit alpha (513 aa).

169–176 (GDRQTGKT) lines the ATP pocket.

It belongs to the ATPase alpha/beta chains family. In terms of assembly, F-type ATPases have 2 components, CF(1) - the catalytic core - and CF(0) - the membrane proton channel. CF(1) has five subunits: alpha(3), beta(3), gamma(1), delta(1), epsilon(1). CF(0) has three main subunits: a(1), b(2) and c(9-12). The alpha and beta chains form an alternating ring which encloses part of the gamma chain. CF(1) is attached to CF(0) by a central stalk formed by the gamma and epsilon chains, while a peripheral stalk is formed by the delta and b chains.

Its subcellular location is the cell inner membrane. The enzyme catalyses ATP + H2O + 4 H(+)(in) = ADP + phosphate + 5 H(+)(out). Its function is as follows. Produces ATP from ADP in the presence of a proton gradient across the membrane. The alpha chain is a regulatory subunit. The polypeptide is ATP synthase subunit alpha (Shewanella oneidensis (strain ATCC 700550 / JCM 31522 / CIP 106686 / LMG 19005 / NCIMB 14063 / MR-1)).